The following is a 593-amino-acid chain: Glyoxylate carboligase (593 aa).

It belongs to the TPP enzyme family. In terms of assembly, homotetramer. The cofactor is Mg(2+). Requires thiamine diphosphate as cofactor.

It carries out the reaction 2 glyoxylate + H(+) = 2-hydroxy-3-oxopropanoate + CO2. Its pathway is organic acid metabolism; glycolate degradation; 3-phospho-D-glycerate from glycolate: step 2/4. Functionally, catalyzes the condensation of two molecules of glyoxylate to give 2-hydroxy-3-oxopropanoate (also termed tartronate semialdehyde). The sequence is that of Glyoxylate carboligase (gcl) from Escherichia coli O157:H7.